The following is a 692-amino-acid chain: Enzymatic polyprotein (692 aa).

The active-site For protease activity is the aspartate 36. In terms of domain architecture, Reverse transcriptase spans 227-411 (LKKGLIRESQ…QEIEYLGLKI (185 aa)).

Belongs to the caulimoviridae enzymatic polyprotein family.

It catalyses the reaction DNA(n) + a 2'-deoxyribonucleoside 5'-triphosphate = DNA(n+1) + diphosphate. Functionally, encodes for at least two polypeptides: protease (PR) and reverse transcriptase (RT). The protease processes the polyprotein in cis. Reverse transcriptase is multifunctional enzyme that converts the viral RNA genome into dsDNA in viral cytoplasmic capsids. This enzyme displays a DNA polymerase activity that can copy either DNA or RNA templates, and a ribonuclease H (RNase H) activity that cleaves the RNA strand of RNA-DNA heteroduplexes in a partially processive 3'- to 5'-endonucleasic mode. Neo-synthesized pregenomic RNA (pgRNA) are encapsidated, and reverse-transcribed inside the nucleocapsid. Partial (+)DNA is synthesized from the (-)DNA template and generates the relaxed circular DNA (RC-DNA) genome. After budding and infection, the RC-DNA migrates in the nucleus, and is converted into a plasmid-like covalently closed circular DNA (cccDNA). This chain is Enzymatic polyprotein, found in Soybean chlorotic mottle virus.